The primary structure comprises 192 residues: GTP-binding protein RHO2 (192 aa).

Position 14–21 (14–21 (GDGACGKT)) interacts with GTP. The short motif at 36-44 (YHPTVFENY) is the Effector region element. Residues 61–65 (DTAGQ) and 119–122 (LKKD) contribute to the GTP site. A lipid anchor (S-palmitoyl cysteine) is attached at C188. C189 carries the cysteine methyl ester modification. Residue C189 is the site of S-geranylgeranyl cysteine attachment. Positions 190–192 (IIL) are cleaved as a propeptide — removed in mature form.

Belongs to the small GTPase superfamily. Rho family. In terms of assembly, interacts with BEM4.

It is found in the cell membrane. It catalyses the reaction GTP + H2O = GDP + phosphate + H(+). This Saccharomyces cerevisiae (strain ATCC 204508 / S288c) (Baker's yeast) protein is GTP-binding protein RHO2 (RHO2).